The following is a 455-amino-acid chain: Bifunctional protein GlmU (455 aa).

A pyrophosphorylase region spans residues 1 to 226; sequence MSLDIVILAA…AMEVQGANDR (226 aa). Residues 8–11, K22, Q73, 78–79, 99–101, G136, E151, N166, and N224 contribute to the UDP-N-acetyl-alpha-D-glucosamine site; these read LAAG, GT, and YGD. A Mg(2+)-binding site is contributed by D101. N224 is a binding site for Mg(2+). The segment at 227 to 247 is linker; the sequence is RQLSELERHYQLREGRRLMAQ. Residues 248 to 455 are N-acetyltransferase; the sequence is GVTLRDPARF…WKRPEKIKKS (208 aa). Positions 330 and 348 each coordinate UDP-N-acetyl-alpha-D-glucosamine. H360 functions as the Proton acceptor in the catalytic mechanism. UDP-N-acetyl-alpha-D-glucosamine-binding residues include Y363 and N374. Acetyl-CoA is bound by residues A377, 383–384, S402, A420, and R437; that span reads NY.

It in the N-terminal section; belongs to the N-acetylglucosamine-1-phosphate uridyltransferase family. The protein in the C-terminal section; belongs to the transferase hexapeptide repeat family. As to quaternary structure, homotrimer. Requires Mg(2+) as cofactor.

The protein localises to the cytoplasm. The enzyme catalyses alpha-D-glucosamine 1-phosphate + acetyl-CoA = N-acetyl-alpha-D-glucosamine 1-phosphate + CoA + H(+). It carries out the reaction N-acetyl-alpha-D-glucosamine 1-phosphate + UTP + H(+) = UDP-N-acetyl-alpha-D-glucosamine + diphosphate. The protein operates within nucleotide-sugar biosynthesis; UDP-N-acetyl-alpha-D-glucosamine biosynthesis; N-acetyl-alpha-D-glucosamine 1-phosphate from alpha-D-glucosamine 6-phosphate (route II): step 2/2. It functions in the pathway nucleotide-sugar biosynthesis; UDP-N-acetyl-alpha-D-glucosamine biosynthesis; UDP-N-acetyl-alpha-D-glucosamine from N-acetyl-alpha-D-glucosamine 1-phosphate: step 1/1. It participates in bacterial outer membrane biogenesis; LPS lipid A biosynthesis. Its function is as follows. Catalyzes the last two sequential reactions in the de novo biosynthetic pathway for UDP-N-acetylglucosamine (UDP-GlcNAc). The C-terminal domain catalyzes the transfer of acetyl group from acetyl coenzyme A to glucosamine-1-phosphate (GlcN-1-P) to produce N-acetylglucosamine-1-phosphate (GlcNAc-1-P), which is converted into UDP-GlcNAc by the transfer of uridine 5-monophosphate (from uridine 5-triphosphate), a reaction catalyzed by the N-terminal domain. This chain is Bifunctional protein GlmU, found in Pseudomonas putida (strain ATCC 47054 / DSM 6125 / CFBP 8728 / NCIMB 11950 / KT2440).